The chain runs to 1581 residues: Mediator of RNA polymerase II transcription subunit 1 (1581 aa).

Positions 1-670 are interaction with the Mediator complex and THRA; it reads MKAQGETEES…YGSSPLERQN (670 aa). The tract at residues 16–590 is interaction with ESR1; the sequence is MSSLLERLHA…SIKDRHESVG (575 aa). Interaction with the Mediator complex regions lie at residues 108-212 and 215-390; these read FYVE…GYLT and SGGH…SLQG. An interaction with THRA region spans residues 405–644; that stretch reads PLILNLIRHQ…MAGNTKNHPM (240 aa). The tract at residues 542–789 is interaction with VDR; it reads PASSPGYGMT…TDILSDIAEE (248 aa). A Phosphoserine modification is found at Ser-588. The short motif at 604 to 608 is the LXXLL motif 1 element; it reads LTSLL. Disordered stretches follow at residues 609-705, 792-820, 874-893, and 948-1566; these read QITG…HQTE, KLPS…QSTL, SQSG…GDND, and EHHS…DFMI. Residues 622–632 show a composition bias toward pro residues; the sequence is PTPPHHTPPPV. An interaction with PPARGC1A and THRA region spans residues 622–701; that stretch reads PTPPHHTPPP…SSRLPPEKPK (80 aa). The LXXLL motif 2 motif lies at 645–649; that stretch reads LMNLL. Residues 655–675 are compositionally biased toward polar residues; that stretch reads QDFSTLYGSSPLERQNSSSGS. Residues 656-1066 form an interaction with ESR1 region; that stretch reads DFSTLYGSSP…TPPIPKITIQ (411 aa). Ser-664 carries the phosphoserine modification. The tract at residues 681 to 715 is interaction with GATA1; sequence CSGSNKTKKKKSSRLPPEKPKHQTEDDFQRELFSM. Over residues 696 to 705 the composition is skewed to basic and acidic residues; sequence PPEKPKHQTE. A Phosphoserine modification is found at Ser-795. Position 805 is a phosphothreonine (Thr-805). Residues 808–820 show a composition bias toward polar residues; that stretch reads RDSSSSGHSQSTL. The Integrase domain-binding motif (IBM) motif lies at 875-902; sequence QSGFGEEYFDESSQSGDNDDFKGFASQA. 2 positions are modified to phosphoserine: Ser-887 and Ser-953. Basic and acidic residues predominate over residues 963–974; that stretch reads LGKEKTQKRVKE. The residue at position 1032 (Thr-1032) is a Phosphothreonine; by MAPK1 or MAPK3. The span at 1034–1045 shows a compositional bias: low complexity; it reads PTSTGGSKSPGS. Thr-1051 and Thr-1057 each carry phosphothreonine. Composition is skewed to low complexity over residues 1078–1094 and 1101–1156; these read SSHS…SSGS and SSSS…PGSS. Residue Ser-1156 is modified to Phosphoserine. A compositionally biased stretch (polar residues) spans 1162-1195; it reads GLSSGSSSTKMKPQGKPSSLMNPSLSKPNISPSH. Lys-1177 carries the N6-acetyllysine modification. Position 1207 is a phosphoserine (Ser-1207). A Phosphothreonine modification is found at Thr-1215. Composition is skewed to low complexity over residues 1218-1227 and 1234-1293; these read SSKAKSPISS and MSGT…SKGK. Ser-1223 is subject to Phosphoserine. The tract at residues 1249-1421 is interaction with TP53; sequence LGSSGSLSQK…KPGESSGEGL (173 aa). Ser-1302 bears the Phosphoserine mark. Positions 1330–1345 are enriched in polar residues; sequence GVSTNSSSHPMSSKHN. Position 1347 is a phosphoserine (Ser-1347). Basic and acidic residues predominate over residues 1352–1364; that stretch reads QGKREKSDKDKSK. Ser-1403 and Ser-1433 each carry phosphoserine. 2 stretches are compositionally biased toward polar residues: residues 1425–1440 and 1448–1482; these read MASS…SGST and PSHS…SPSS. Thr-1440 carries the post-translational modification Phosphothreonine. The residue at position 1457 (Thr-1457) is a Phosphothreonine; by MAPK1 or MAPK3. Ser-1463, Ser-1465, Ser-1479, Ser-1481, and Ser-1482 each carry phosphoserine. Basic residues predominate over residues 1496–1505; it reads KHKKHKKEKK. A compositionally biased stretch (basic and acidic residues) spans 1506–1522; it reads KVKDKDRDRDRDKDRDK. Residue Lys-1529 is modified to N6-acetyllysine. Over residues 1533–1552 the composition is skewed to polar residues; sequence WSKSPISSDQSLSMTSNTIL.

Belongs to the Mediator complex subunit 1 family. As to quaternary structure, component of the Mediator complex, which is composed of MED1, MED4, MED6, MED7, MED8, MED9, MED10, MED11, MED12, MED13, MED13L, MED14, MED15, MED16, MED17, MED18, MED19, MED20, MED21, MED22, MED23, MED24, MED25, MED26, MED27, MED29, MED30, MED31, CCNC, CDK8 and CDC2L6/CDK11. The MED12, MED13, CCNC and CDK8 subunits form a distinct module termed the CDK8 module. Mediator containing the CDK8 module is less active than Mediator lacking this module in supporting transcriptional activation. Individual preparations of the Mediator complex lacking one or more distinct subunits have been variously termed ARC, CRSP, DRIP, PC2, SMCC and TRAP. This subunit specifically interacts with a number of nuclear receptors in a ligand-dependent fashion including AR, ESR1, ESR2, PPARA, PPARG, RORA, RXRA, RXRG, THRA, THRB and VDR. Interacts with CTNNB1, GABPA, GLI3, PPARGC1A and TP53. Interacts with YWHAH. Interacts with CLOCK; this interaction requires the presence of THRAP3. Interacts with GATA1 and CCAR1. Interacts with NR4A3. Interacts (via IBM motif) with PSIP1 (via IBD domain); phosphorylation increases its affinity for PSIP1. Interacts with USP22. Post-translationally, phosphorylated by MAPK1 or MAPK3 during G2/M phase which may enhance protein stability and promote entry into the nucleolus. Phosphorylation increases its interaction with PSIP1. Ubiquitously expressed.

Its subcellular location is the nucleus. Component of the Mediator complex, a coactivator involved in the regulated transcription of nearly all RNA polymerase II-dependent genes. Mediator functions as a bridge to convey information from gene-specific regulatory proteins to the basal RNA polymerase II transcription machinery. Mediator is recruited to promoters by direct interactions with regulatory proteins and serves as a scaffold for the assembly of a functional preinitiation complex with RNA polymerase II and the general transcription factors. Acts as a coactivator for GATA1-mediated transcriptional activation during erythroid differentiation of K562 erythroleukemia cells. This chain is Mediator of RNA polymerase II transcription subunit 1 (MED1), found in Homo sapiens (Human).